The sequence spans 1843 residues: MEPAERAGVGEPPEPGGRPEPGPRGFVPQKEIVYNKLLPYAERLDAESDLQLAQIKCNLGRAVQLQELWPGGLFWTRKLSTYIRLYGRKFSKEDHVLFIKLLYELVSIPKLEISMMQGFARLLINLLKKKELLSRADLELPWRPLYDMVERILYSKTEHLGLNWFPNSVENILKTLVKSCRPYFPADATAEMLEEWRPLMCPFDVTMQKAITYFEIFLPTSLPPELHHKGFKLWFDELIGLWVSVQNLPQWEGQLVNLFARLATDNIGYIDWDPYVPKIFTRILRSLNLPVGSSQVLVPRFLTNAYDIGHAVIWITAMMGGPSKLVQKHLAGLFNSITSFYHPSNNGRWLNKLMKLLQRLPNSVVRRLHRERYKKPSWLTPVPDSHKLTDQDVTDFVQCIIQPVLLAMFSKTGSLEAAQALQNLALMRPELVIPPVLERTYPALETLTEPHQLTATLSCVIGVARSLVSGGRWFPEGPTHMLPLLMRALPGVDPNDFSKCMITFQFIATFSTLVPLVDCSSVLQERNDLTEVERELCSATAEFEDFVLQFMDRCFGLIESSTLEQTREETETEKMTHLESLVELGLSSTFSTILTQCSKEIFMVALQKVFNFSTSHIFETRVAGRMVADMCRAAVKCCPEESLKLFVPHCCSVITQLTMNDDVLNDEELDKELLWNLQLLSEITRVDGRKLLLYREQLVKILQRTLHLTCKQGYTLSCNLLHHLLRSTTLIYPTEYCSVPGGFDKPPSEYFPIKDWGKPGDLWNLGIQWHVPSSEEVSFAFYLLDSFLQPELVKLQHCGDGKLEMSRDDILQSLTIVHNCLIGSGNLLPPLKGEPVTNLVPSMVSLEETKLYTGLEYDLSRENHREVIATVIRKLLNHILDNSEDDTKSLFLIIKIIGDLLQFQGSHKHEFDSRWKSFNLVKKSMENRLHGKKQHIRALLIDRVMLQHELRTLTVEGCEYKKIHQDMIRDLLRLSTSSYSQVRNKAQQTFFAALGAYNFCCRDIIPLVLEFLRPDRQGVTQQQFKGALYCLLGNHSGVCLANLHDWDCIVQTWPAIVSSGLSQAMSLEKPSIVRLFDDLAEKIHRQYETIGLDFTIPKSCVEIAELLQQSKNPSINQILLSPEKIKEGIKRQQEKNADALRNYENLVDTLLDGVEQRNLPWKFEHIGIGLLSLLLRDDRVLPLRAIRFFVENLNHDAIVVRKMAISAVAGILKQLKRTHKKLTINPCEISGCPKPTQIIAGDRPDNHWLHYDSKTIPRTKKEWESSCFVEKTHWGYYTWPKNMVVYAGVEEQPKLGRSREDMTEAEQIIFDHFSDPKFVEQLITFLSLEDRKGKDKFNPRRFCLFKGIFRNFDDAFLPVLKPHLEHLVADSHESTQRCVAEIIAGLIRGSKHWTFEKVEKLWELLCPLLRTALSNITVETYNDWGACIATSCESRDPRKLHWLFELLLESPLSGEGGSFVDACRLYVLQGGLAQQEWRVPELLHRLLKYLEPKLTQVYKNVRERIGSVLTYIFMIDVSLPNTTPTISPHVPEFTARILEKLKPLMDVDEEIQNHVMEENGIGEEDERTQGIKLLKTILKWLMASAGRSFSTAVTEQLQLLPLFFKIAPVENDNSYDELKRDAKLCLSLMSQGLLYPHQVPLVLQVLKQTARSSSWHARYTVLTYLQTMVFYNLFIFLNNEDAVKDIRWLVISLLEDEQLEVREMAATTLSGLLQCNFLTMDSPMQIHFEQLCKTKLPKKRKRDPGSVGDTIPSAELVKRHAGVLGLGACVLSSPYDVPTWMPQLLMNLSAHLNDPQPIEMTVKKTLSNFRRTHHDNWQEHKQQFTDDQLLVLTDLLVSPCYYA.

Residues 1–11 (MEPAERAGVGE) show a composition bias toward low complexity. The interval 1–25 (MEPAERAGVGEPPEPGGRPEPGPRG) is disordered. The segment covering 12 to 22 (PPEPGGRPEPG) has biased composition (pro residues). HEAT repeat units lie at residues 475–519 (PEGP…LVDC) and 998–1037 (NFCCRDIIPLVLEFLRPDRQGVTQQQFKGALYCLLGNHSG). A Phosphoserine modification is found at serine 1121. HEAT repeat units lie at residues 1179-1217 (RVLPLRAIRFFVENLNHDAIVVRKMAISAVAGILKQLKR) and 1354-1392 (DAFLPVLKPHLEHLVADSHESTQRCVAEIIAGLIRGSKH). Residue serine 1614 is modified to Phosphoserine. 2 HEAT repeats span residues 1636 to 1674 (PHQVPLVLQVLKQTARSSSWHARYTVLTYLQTMVFYNLF) and 1680 to 1718 (EDAVKDIRWLVISLLEDEQLEVREMAATTLSGLLQCNFL). Residues 1650 to 1738 (ARSSSWHARY…EQLCKTKLPK (89 aa)) are bromodomain-like (BRDL). The residue at position 1746 (serine 1746) is a Phosphoserine.

This sequence belongs to the BLM10 family. As to quaternary structure, homodimer. Interacts with the 20S and 26S proteasomes. Component of the spermatoproteasome, a form of the proteasome specifically found in testis.

Its subcellular location is the cytoplasm. It is found in the cytosol. It localises to the nucleus. The protein resides in the nucleus speckle. Its function is as follows. Associated component of the proteasome that specifically recognizes acetylated histones and promotes ATP- and ubiquitin-independent degradation of core histones during spermatogenesis and DNA damage response. Recognizes and binds acetylated histones via its bromodomain-like (BRDL) region and activates the proteasome by opening the gated channel for substrate entry. Binds to the core proteasome via its C-terminus, which occupies the same binding sites as the proteasomal ATPases, opening the closed structure of the proteasome via an active gating mechanism. Component of the spermatoproteasome, a form of the proteasome specifically found in testis: binds to acetylated histones and promotes degradation of histones, thereby participating actively to the exchange of histones during spermatogenesis. Also involved in DNA damage response in somatic cells, by promoting degradation of histones following DNA double-strand breaks. In Homo sapiens (Human), this protein is Proteasome activator complex subunit 4.